The chain runs to 293 residues: ATP phosphoribosyltransferase (293 aa).

The protein belongs to the ATP phosphoribosyltransferase family. Long subfamily. The cofactor is Mg(2+).

Its subcellular location is the cytoplasm. The enzyme catalyses 1-(5-phospho-beta-D-ribosyl)-ATP + diphosphate = 5-phospho-alpha-D-ribose 1-diphosphate + ATP. It functions in the pathway amino-acid biosynthesis; L-histidine biosynthesis; L-histidine from 5-phospho-alpha-D-ribose 1-diphosphate: step 1/9. Feedback inhibited by histidine. Catalyzes the condensation of ATP and 5-phosphoribose 1-diphosphate to form N'-(5'-phosphoribosyl)-ATP (PR-ATP). Has a crucial role in the pathway because the rate of histidine biosynthesis seems to be controlled primarily by regulation of HisG enzymatic activity. This chain is ATP phosphoribosyltransferase, found in Solidesulfovibrio magneticus (strain ATCC 700980 / DSM 13731 / RS-1) (Desulfovibrio magneticus).